The primary structure comprises 427 residues: 3-phosphoshikimate 1-carboxyvinyltransferase (427 aa).

Residues K20, S21, and R25 each coordinate 3-phosphoshikimate. K20 provides a ligand contact to phosphoenolpyruvate. Residues G92 and R120 each coordinate phosphoenolpyruvate. 3-phosphoshikimate contacts are provided by S166, Q168, D312, and K339. Phosphoenolpyruvate is bound at residue Q168. The active-site Proton acceptor is the D312. Phosphoenolpyruvate contacts are provided by R343 and R385.

The protein belongs to the EPSP synthase family. Monomer.

It is found in the cytoplasm. The catalysed reaction is 3-phosphoshikimate + phosphoenolpyruvate = 5-O-(1-carboxyvinyl)-3-phosphoshikimate + phosphate. It functions in the pathway metabolic intermediate biosynthesis; chorismate biosynthesis; chorismate from D-erythrose 4-phosphate and phosphoenolpyruvate: step 6/7. In terms of biological role, catalyzes the transfer of the enolpyruvyl moiety of phosphoenolpyruvate (PEP) to the 5-hydroxyl of shikimate-3-phosphate (S3P) to produce enolpyruvyl shikimate-3-phosphate and inorganic phosphate. The sequence is that of 3-phosphoshikimate 1-carboxyvinyltransferase from Streptococcus equi subsp. zooepidemicus (strain MGCS10565).